Reading from the N-terminus, the 190-residue chain is C-type lectin domain family 5 member A (190 aa).

The Cytoplasmic segment spans residues 1–4 (MNWH). A helical; Signal-anchor for type II membrane protein transmembrane segment spans residues 5–25 (MIISGLIVVVIKVVGMTFFLL). Residues 26–190 (YFPQVFGKSN…YRWICEMNAK (165 aa)) lie on the Extracellular side of the membrane. N51, N146, and N153 each carry an N-linked (GlcNAc...) asparagine glycan. The 107-residue stretch at 80–186 (HQGKCFFFSF…CEVSYRWICE (107 aa)) folds into the C-type lectin domain. Intrachain disulfides connect C101/C185 and C163/C177.

As to quaternary structure, monomer. Homodimer. The majority of CLEC5A is expressed as a monomeric form on macrophages. Interacts with TYROBP/DAP12. The interaction with TYROBP is required for CLEC5 cell surface expression. Interacts with HCST/DAP10. Forms a CLEC5A/TYROBP/HCST trimolecular complex depending almost solely on TYROBP. In terms of processing, N-glycosylated. Contains sialic acid residues. In terms of tissue distribution, strong expression in bone marrow cells and thioglycollate-induced neutrophils (at protein level). Expressed on granulocytes and monocytes from bone marrow and peripheral blood. Expressed in macrophage cell line J-774, but not in T-cell lines, B-cell lines, or mast cell lines.

The protein localises to the cell membrane. Functions as a positive regulator of osteoclastogenesis. Cell surface receptor that signals via TYROBP. Regulates inflammatory responses. This is C-type lectin domain family 5 member A (Clec5a) from Mus musculus (Mouse).